A 518-amino-acid polypeptide reads, in one-letter code: Glucan 1,4-alpha-maltohexaosidase (518 aa).

Positions 1 to 33 (MKMRTGKKGFLSILLAFLLVITSIPFTLVDVEA) are cleaved as a signal peptide. Ca(2+) contacts are provided by Asn139, Asp196, Ala219, Asp221, Asp232, Asp238, Asp240, and Asp242. Asp196 provides a ligand contact to Na(+). The Na(+) site is built by Asp221, Asp232, and Asp238. Residue Asp269 is the Nucleophile of the active site. His273 is a Ca(2+) binding site. Glu299 acts as the Proton donor in catalysis.

It belongs to the glycosyl hydrolase 13 family. Requires Ca(2+) as cofactor. It depends on Na(+) as a cofactor.

Its subcellular location is the secreted. The enzyme catalyses Hydrolysis of (1-&gt;4)-alpha-D-glucosidic linkages in amylaceous polysaccharides, to remove successive maltohexaose residues from the non-reducing chain ends.. It participates in glycan degradation; starch degradation. The polypeptide is Glucan 1,4-alpha-maltohexaosidase (Bacillus sp. (strain 707)).